The primary structure comprises 378 residues: UDP-N-acetylglucosamine--N-acetylmuramyl-(pentapeptide) pyrophosphoryl-undecaprenol N-acetylglucosamine transferase (378 aa).

UDP-N-acetyl-alpha-D-glucosamine is bound by residues 13-15, N124, R165, S193, and Q294; that span reads TGG.

This sequence belongs to the glycosyltransferase 28 family. MurG subfamily.

It is found in the cell inner membrane. It catalyses the reaction di-trans,octa-cis-undecaprenyl diphospho-N-acetyl-alpha-D-muramoyl-L-alanyl-D-glutamyl-meso-2,6-diaminopimeloyl-D-alanyl-D-alanine + UDP-N-acetyl-alpha-D-glucosamine = di-trans,octa-cis-undecaprenyl diphospho-[N-acetyl-alpha-D-glucosaminyl-(1-&gt;4)]-N-acetyl-alpha-D-muramoyl-L-alanyl-D-glutamyl-meso-2,6-diaminopimeloyl-D-alanyl-D-alanine + UDP + H(+). It participates in cell wall biogenesis; peptidoglycan biosynthesis. Functionally, cell wall formation. Catalyzes the transfer of a GlcNAc subunit on undecaprenyl-pyrophosphoryl-MurNAc-pentapeptide (lipid intermediate I) to form undecaprenyl-pyrophosphoryl-MurNAc-(pentapeptide)GlcNAc (lipid intermediate II). In Agrobacterium fabrum (strain C58 / ATCC 33970) (Agrobacterium tumefaciens (strain C58)), this protein is UDP-N-acetylglucosamine--N-acetylmuramyl-(pentapeptide) pyrophosphoryl-undecaprenol N-acetylglucosamine transferase.